Consider the following 424-residue polypeptide: Protein SamB (424 aa).

Residues 2–189 form the UmuC domain; it reads FALADVNSFY…QPVEEIWGVG (188 aa).

Belongs to the DNA polymerase type-Y family.

Functionally, involved in UV protection and mutation. The sequence is that of Protein SamB (samB) from Salmonella typhimurium.